The primary structure comprises 497 residues: Alkene monooxygenase system, oxygenase component subunit alpha (497 aa).

Fe cation is bound by residues Glu-104, Glu-134, His-137, Glu-197, Glu-231, and His-234.

It belongs to the TmoA/XamoA family. The alkene monooxygenase multicomponent enzyme system is composed of an electron transfer component and a monooxygenase component interacting with the effector protein XamoD. The electron transfer component is composed of a ferredoxin reductase (XamoF) and a ferredoxin (XamoC), and the monooxygenase component is formed by a heterohexamer (dimer of heterotrimers) of two alpha subunits (XamoA), two beta subunits (XamoE) and two gamma subunits (XamoB). It depends on Fe(2+) as a cofactor.

The protein resides in the cytoplasm. It carries out the reaction propene + NADH + O2 + H(+) = 1,2-epoxypropane + NAD(+) + H2O. Inhibited by propyne. Its function is as follows. Component of the alkene monooxygenase multicomponent enzyme system which catalyzes the O2- and NADH-dependent epoxidation of short chain (C2 to C6) alkenes to their corresponding epoxides. Also able to catalyze the oxidation of a number of chlorinated alkenes, including trichloroethylene, cis- and trans-1,2-dichloroethylene, vinyl chloride, 1-chloropropylene, 1,3-dichloropropylene and 2,3-dichloropropylene. This Xanthobacter autotrophicus (strain ATCC BAA-1158 / Py2) protein is Alkene monooxygenase system, oxygenase component subunit alpha.